The following is a 428-amino-acid chain: Enolase (428 aa).

Glutamine 163 is a binding site for (2R)-2-phosphoglycerate. The Proton donor role is filled by glutamate 205. Mg(2+)-binding residues include aspartate 242, glutamate 285, and aspartate 312. 4 residues coordinate (2R)-2-phosphoglycerate: lysine 337, arginine 366, serine 367, and lysine 388. Lysine 337 acts as the Proton acceptor in catalysis.

Belongs to the enolase family. Requires Mg(2+) as cofactor.

The protein localises to the cytoplasm. It is found in the secreted. Its subcellular location is the cell surface. The enzyme catalyses (2R)-2-phosphoglycerate = phosphoenolpyruvate + H2O. Its pathway is carbohydrate degradation; glycolysis; pyruvate from D-glyceraldehyde 3-phosphate: step 4/5. Catalyzes the reversible conversion of 2-phosphoglycerate (2-PG) into phosphoenolpyruvate (PEP). It is essential for the degradation of carbohydrates via glycolysis. The protein is Enolase of Neisseria meningitidis serogroup C / serotype 2a (strain ATCC 700532 / DSM 15464 / FAM18).